The sequence spans 61 residues: Conotoxin Tx-D021 (61 aa).

Positions 1–22 (MRCLPVFVILLLLIASTPSVDA) are cleaved as a signal peptide. Positions 23 to 48 (RAKTRDDMSLASFHDDAKRILQILQD) are excised as a propeptide. Cys-60 is subject to Cysteine amide.

It belongs to the conotoxin T superfamily. Post-translationally, contains 2 disulfide bonds that can be either 'C1-C3, C2-C4' or 'C1-C4, C2-C3', since these disulfide connectivities have been observed for conotoxins with cysteine framework V (for examples, see AC P0DQQ7 and AC P81755). As to expression, expressed by the venom duct.

The protein localises to the secreted. This Conus textile (Cloth-of-gold cone) protein is Conotoxin Tx-D021.